The sequence spans 464 residues: Trigger factor (464 aa).

The region spanning 162-243 (GDFISIDLSA…VGTVKERELP (82 aa)) is the PPIase FKBP-type domain. The segment at 428 to 464 (GASVDTAELFGNGEADTEEAASTDEVASDSAEGEDQK) is disordered.

It belongs to the FKBP-type PPIase family. Tig subfamily.

The protein localises to the cytoplasm. It catalyses the reaction [protein]-peptidylproline (omega=180) = [protein]-peptidylproline (omega=0). Its function is as follows. Involved in protein export. Acts as a chaperone by maintaining the newly synthesized protein in an open conformation. Functions as a peptidyl-prolyl cis-trans isomerase. The protein is Trigger factor of Rhodococcus opacus (strain B4).